A 588-amino-acid polypeptide reads, in one-letter code: Adenine deaminase (588 aa).

This sequence belongs to the metallo-dependent hydrolases superfamily. Adenine deaminase family. As to quaternary structure, homodimer. Requires Mn(2+) as cofactor.

The enzyme catalyses adenine + H2O + H(+) = hypoxanthine + NH4(+). In Escherichia coli (strain K12 / DH10B), this protein is Adenine deaminase.